Here is a 778-residue protein sequence, read N- to C-terminus: Hyaluronate lyase (778 aa).

Positions 1–33 (MSWNRRSFLGALGVTCLAGAGMVPIVRPRTAAA) form a signal peptide, tat-type signal. Active-site residues include asparagine 200, histidine 250, and tyrosine 259.

It belongs to the polysaccharide lyase 8 family. Predicted to be exported by the Tat system. The position of the signal peptide cleavage has not been experimentally proven.

It carries out the reaction [hyaluronan](n) = n 3-(4-deoxy-beta-D-gluc-4-enuronosyl)-N-acetyl-D-glucosamine + H2O. Its activity is regulated as follows. Is salt-dependent and is active over a wide range of NaCl concentrations. Activity is slightly promoted by Ni(2+), and inhibited by most of the tested metal ions, including Li(+), K(+), Ba(2+), Mg(2+), Zn(2+), Ca(2+), Mn(2+) and Al(3+). Its function is as follows. Degrades hyaluronic acid into unsaturated disaccharides as the end products. Exhibits very low activity against various types of chondroitin sulfate variants. This chain is Hyaluronate lyase, found in Thermasporomyces composti.